The primary structure comprises 299 residues: CDP-abequose synthase (299 aa).

Residue Thr-117 coordinates substrate. Tyr-134 functions as the Proton acceptor in the catalytic mechanism.

It belongs to the NAD(P)-dependent epimerase/dehydratase family.

It catalyses the reaction CDP-alpha-D-abequose + NADP(+) = CDP-4-dehydro-3,6-dideoxy-alpha-D-glucose + NADPH + H(+). The protein operates within bacterial outer membrane biogenesis; LPS O-antigen biosynthesis. This is CDP-abequose synthase (rfbJ) from Salmonella typhimurium (strain LT2 / SGSC1412 / ATCC 700720).